The sequence spans 247 residues: 3-deoxy-manno-octulosonate cytidylyltransferase (247 aa).

This sequence belongs to the KdsB family.

It is found in the cytoplasm. It carries out the reaction 3-deoxy-alpha-D-manno-oct-2-ulosonate + CTP = CMP-3-deoxy-beta-D-manno-octulosonate + diphosphate. The protein operates within nucleotide-sugar biosynthesis; CMP-3-deoxy-D-manno-octulosonate biosynthesis; CMP-3-deoxy-D-manno-octulosonate from 3-deoxy-D-manno-octulosonate and CTP: step 1/1. Its pathway is bacterial outer membrane biogenesis; lipopolysaccharide biosynthesis. In terms of biological role, activates KDO (a required 8-carbon sugar) for incorporation into bacterial lipopolysaccharide in Gram-negative bacteria. The chain is 3-deoxy-manno-octulosonate cytidylyltransferase from Methylobacterium radiotolerans (strain ATCC 27329 / DSM 1819 / JCM 2831 / NBRC 15690 / NCIMB 10815 / 0-1).